The sequence spans 1358 residues: DNA-directed RNA polymerase subunit beta (1358 aa).

The protein belongs to the RNA polymerase beta chain family. The RNAP catalytic core consists of 2 alpha, 1 beta, 1 beta' and 1 omega subunit. When a sigma factor is associated with the core the holoenzyme is formed, which can initiate transcription.

It catalyses the reaction RNA(n) + a ribonucleoside 5'-triphosphate = RNA(n+1) + diphosphate. DNA-dependent RNA polymerase catalyzes the transcription of DNA into RNA using the four ribonucleoside triphosphates as substrates. The protein is DNA-directed RNA polymerase subunit beta of Francisella tularensis subsp. tularensis (strain FSC 198).